The following is a 708-amino-acid chain: Lactotransferrin (708 aa).

A signal peptide spans 1–19; that stretch reads MKLFFPALLSLGALGLCLA. Transferrin-like domains are found at residues 25–352 and 364–693; these read VRWC…GLRE and VVWC…KLRR. Intrachain disulfides connect Cys-28/Cys-64 and Cys-38/Cys-55. The segment at 44-51 is interaction with E.coli ompC; sequence RMKKVRGP. A Fe(3+)-binding site is contributed by Asp-79. Lys-92 is a catalytic residue. Tyr-111 lines the Fe(3+) pocket. Disulfide bonds link Cys-134–Cys-217, Cys-176–Cys-192, Cys-179–Cys-202, Cys-189–Cys-200, and Cys-250–Cys-264. 4 residues coordinate hydrogencarbonate: Thr-136, Arg-140, Ala-142, and Gly-143. Residue Tyr-211 participates in Fe(3+) binding. Asn-252 carries N-linked (GlcNAc...) asparagine glycosylation. His-272 provides a ligand contact to Fe(3+). Ser-278 acts as the Nucleophile in catalysis. Disulfide bonds link Cys-367/Cys-399 and Cys-377/Cys-390. N-linked (GlcNAc...) asparagine glycosylation is present at Asn-385. Residues Asp-414 and Tyr-452 each coordinate Fe(3+). Disulfide bonds link Cys-424–Cys-703, Cys-444–Cys-666, Cys-476–Cys-551, Cys-500–Cys-694, Cys-510–Cys-524, Cys-521–Cys-534, Cys-592–Cys-606, and Cys-644–Cys-649. Positions 478, 482, 484, and 485 each coordinate hydrogencarbonate. Residue Asn-537 is glycosylated (N-linked (GlcNAc...) asparagine). Tyr-545 contacts Fe(3+). N-linked (GlcNAc...) asparagine glycosylation occurs at Asn-594. His-614 provides a ligand contact to Fe(3+).

The protein belongs to the transferrin family. As to quaternary structure, monomer. Found in a complex with LTF, CLU, EPPIN and SEMG1. Interacts with E.coli outer membrane protein C (OmpC). Found in a complex with MPO and LTF; interacts directly with CP, allows Fe(3+) incorporation into LTF and activation of CP ferroxidase activity. In terms of processing, poly-N-acetyllactosaminic carbohydrate moiety seems to be needed for TLR4 activation.

The protein resides in the secreted. It localises to the cytoplasmic granule. Its function is as follows. Transferrins are iron binding transport proteins which can bind two Fe(3+) ions in association with the binding of an anion, usually bicarbonate. In terms of biological role, major iron-binding and multifunctional protein found in exocrine fluids such as breast milk and mucosal secretions. Has antimicrobial activity, which depends on the extracellular cation concentration. Antimicrobial properties include bacteriostasis, which is related to its ability to sequester free iron and thus inhibit microbial growth, as well as direct bactericidal properties leading to the release of lipopolysaccharides from the bacterial outer membrane. Can also prevent bacterial biofilm development in P.aeruginosa infection. Has weak antifungal activity against C.albicans. Has anabolic, differentiating and anti-apoptotic effects on osteoblasts and can also inhibit osteoclastogenesis, possibly playing a role in the regulation of bone growth. Promotes binding of species C adenoviruses to epithelial cells, promoting adenovirus infection. Can inhibit papillomavirus infections. Stimulates the TLR4 signaling pathway leading to NF-kappa-B activation and subsequent pro-inflammatory cytokine production while also interfering with the lipopolysaccharide (LPS)-stimulated TLR4 signaling. Inhibits neutrophil granulocyte migration to sites of apoptosis, when secreted by apoptotic cells. Stimulates VEGFA-mediated endothelial cell migration and proliferation. Binds heparin, chondroitin sulfate and possibly other glycosaminoglycans (GAGs). Also binds specifically to pneumococcal surface protein A (PspA), the lipid A portion of bacterial lipopolysaccharide (LPS), lysozyme and DNA. Lactoferricin binds to the bacterial surface and is crucial for the bactericidal functions. Has some antiviral activity against papillomavirus infection. N-terminal region shows strong antifungal activity against C.albicans. Contains two BBXB heparin-binding consensus sequences that appear to form the predominate functional GAG-binding site. Functionally, the lactotransferrin transferrin-like domain 1 functions as a serine protease of the peptidase S60 family that cuts arginine rich regions. This function contributes to the antimicrobial activity. Shows a preferential cleavage at -Arg-Ser-Arg-Arg-|- and -Arg-Arg-Ser-Arg-|-, and of Z-Phe-Arg-|-aminomethylcoumarin sites. This Camelus dromedarius (Dromedary) protein is Lactotransferrin (LTF).